The sequence spans 420 residues: Reticulon-4 receptor-like 2 (420 aa).

A signal peptide spans 1–30; sequence MLPGLRRLLQGPASACLLLTLLALPSVTPS. 2 cysteine pairs are disulfide-bonded: Cys-31–Cys-37 and Cys-35–Cys-46. One can recognise an LRRNT domain in the interval 31–60; sequence CPMLCTCYSSPPTVSCQANNFSSVPLSLPP. Asn-50 carries N-linked (GlcNAc...) asparagine glycosylation. LRR repeat units follow at residues 61-82, 83-104, 107-129, 132-153, 156-177, 180-201, 204-225, and 228-249; these read STQR…TFGP, NLLT…TFRH, ALEE…TFQG, RLQS…IFRG, SLQY…LFAD, NLSH…VFRG, SLDR…AFHG, and RLTI…ALAD. Asn-93 carries an N-linked (GlcNAc...) asparagine glycan. A glycan (N-linked (GlcNAc...) asparagine) is linked at Asn-236. The 52-residue stretch at 261-312 folds into the LRRCT domain; sequence NPWACDCRARPLWAWFQRARVSSSDVTCATPPERQGRDLRALRDSDFQACPP. 2 cysteine pairs are disulfide-bonded: Cys-265–Cys-288 and Cys-267–Cys-310. A disordered region spans residues 286–399; that stretch reads VTCATPPERQ…CQAPADSRGP (114 aa). Over residues 294–306 the composition is skewed to basic and acidic residues; it reads RQGRDLRALRDSD. The tract at residues 315–327 is important for interaction with MAG; it reads PTRPGSRARGNSS. A compositionally biased stretch (basic and acidic residues) spans 351–360; it reads LPAEDSRGRQ. Gly-398 carries GPI-anchor amidated glycine lipidation. The propeptide at 399–420 is removed in mature form; the sequence is PALSAGLRTPLLCLLPLALHHL.

Belongs to the Nogo receptor family. In terms of assembly, interaction with MAG is controversial, and may be indirect. Interacts with MAG. Does not interact with OMG and RTN4. Undergoes zinc metalloproteinase-mediated ectodomain shedding in neuroblastoma cells; is released both as a full-length ectodomain and an N-terminal fragment containing the leucine-rich repeat (LRR) region of the protein. Post-translationally, N-glycosylated. In terms of tissue distribution, detected in brain. Detected in hippocampus neurons (at protein level).

The protein localises to the cell membrane. The protein resides in the membrane raft. Its subcellular location is the cell projection. It is found in the dendrite. It localises to the axon. The protein localises to the perikaryon. Functionally, cell surface receptor that plays a functionally redundant role in the inhibition of neurite outgrowth mediated by MAG. Plays a functionally redundant role in postnatal brain development. Contributes to normal axon migration across the brain midline and normal formation of the corpus callosum. Does not seem to play a significant role in regulating axon regeneration in the adult central nervous system. Protects motoneurons against apoptosis; protection against apoptosis is probably mediated by MAG. Like other family members, plays a role in restricting the number dendritic spines and the number of synapses that are formed during brain development. Signaling mediates activation of Rho and downstream reorganization of the actin cytoskeleton. This is Reticulon-4 receptor-like 2 from Mus musculus (Mouse).